A 1205-amino-acid chain; its full sequence is MNTNNIKKYAPQARNDFRDAVIQKLTTLGIAADKKGNLQIAEAETIGETVRYGQFDYPLSTLPRRERLVKRAREQGFEVLVEHCAYTWFNRLCAIRYMELHGYLDHGFRMLSHPETPTAFEVLDHVPEVAEALLPESKAQLVEMKLSGNQDEALYRELLLGQCHALHHAMPFLFEAVDDEAELLLPDNLTRTDSILRGLVDDIPEEDWEQVEVIGWLYQFYISEKKDAVIGKVVKSEDIPAATQLFTPNWIVQYLVQNSVGRQWLQTYPDSPLKDKMEYYIEPAEQTPEVQAQLAAITPASIEPESIKVLDPACGSGHILTEAYNVLKAIYEERGYRTRDIPQLILENNIFGLDIDDRAAQLSGFAMLMLARQDDRRILGRGVRLNIVSLQESKLDIAEVWTKLNFHQHMQRGSMGDMFTQGTALANTDSAEYKLLMRTLALFTSAKTLGSLIQVPQEDEAALKAFLERLYRLAVEGDIQQKEAAAELIPYIQQAWILAQRYDAVVANPPYMGGKGMNGDLKEFAKKQFPDSKSDLFAMFMQHAFSLLKENGFNAQVNMQSWMFLSSYEALRGWLLDNKTFITMAHLGARAFGQISGEVVQTTAWVIKNNHSGFYKPVFFRLVDDNEEHKKNNLLNRMNCFKNTLQNDFKKIPGSPIAYWATLAFINSFLKLPALGTRAVKGLDTNGSIDVFLRRWPEVSINSFDALGKGNSKWFPIAKGGELRKWFGNHEYIINYENDGIELRKNKANLRNKDMYFQEGGTWTVVSTTGFSMRYMPKGFLFDQGGSAVFCENNDELSIYNILACMNSKYINYSASLICPTLNFTTGDVRKFPVIKNNHLEDLAKKAIEISKADWNQFETSWEFSKNKLIEHKGNVAYSYASYCNFQDKLYEQLVNIEKNINNIIEEILGFKIETTENSELITLNSNKIYRYGQSETNDTFLNRHRSDTISELISYSVGCQMGRYSLDREGLVYAHEGNKGFAELAAEGAYKTFPADNDGILPLMDDEWFEDDVTSRVKEFVRTVWGEEHLQENLEFIAESLCLYAIKPKKGESALETIRRYLSTQFWKDHMKMYKKRPIYWLFSSGKEKAFECLVYLHRYNDATLSRMRTEYVVPLLARYQANIDRLNDQLDEASGGEATRLKRERDSLIKKFSELRSYDDRLRHYADMRISIDLDDGVKVNYGKFGDLLADVKAITGNAPEAI.

Belongs to the methyltransferase superfamily. PglX adenine methyltransferase family. In terms of assembly, (Microbial infection) Interacts with phage T7 protein Ocr (AC P03775, gene 0.3) during an infection and when the protein is expressed from a plasmid; this interaction inhibits the enzymatic activity of PglX/BrxX through high-affinity binding. Forms a 2:2 tetrameric complex with phage T7 OCR.

It carries out the reaction a 2'-deoxyadenosine in DNA + S-adenosyl-L-methionine = an N(6)-methyl-2'-deoxyadenosine in DNA + S-adenosyl-L-homocysteine + H(+). With respect to regulation, (Microbial infection) Methyltransferase activity is inhibited by phage T7 protein OCR (AC P03775, gene 0.3). Viability of cells overexpressing OCR is unaffected. Its function is as follows. BREX systems (bacteriophage exclusion) provide immunity against bacteriophage. Part of a type 1 BREX system which protects against dsDNA phage. This system allows phage adsorption but prevents phage DNA replication, without degradation of the phage DNA. Methylation of bacterial DNA by this protein guides self/non-self discrimination. When the brxA-brxB-brxC-pglX-pglZ-brxL genes are transformed into a susceptible E.coli strain (BW25113) they confer very high resistance to infection by bacteriophage VR7 and VpaE1, about 100-fold protection against lambda, T5 and T7 (probably with a mutated 0.3 gene) and no protection against RNA phage Qbeta, ssDNA phage M13 or dSDNA phage T4 and VR5. Glycosylated phage DNA is not susceptible to BREX. The BREX system does not confer resistance to lysogenic lambda phage, i.e. prophage that are integrated into the chromosomal DNA and then induced to form phage. In terms of biological role, methylates the adenine in the fifth position of the hexamer 5'-GGTAAG-3' in genomic DNA; methylates the same sequence in the few phage that escape the BREX system. Methylated phage are now resistant to BREX, showing immunity is provided by an epigenetic modification. Expression of this protein alone has no effect on phage infection, does not lead to methylated DNA and mildly inhibits growth. The sequence is that of Adenine-specific methyltransferase BrxX (pglX) from Escherichia coli O9:H4 (strain HS).